Here is a 398-residue protein sequence, read N- to C-terminus: Cap-specific mRNA (nucleoside-2'-O-)-methyltransferase 1 (398 aa).

The RrmJ-type SAM-dependent 2'-O-MTase domain occupies glutamine 85–leucine 298. Glycine 132 and aspartate 211 together coordinate S-adenosyl-L-methionine. Lysine 252 (proton acceptor) is an active-site residue. Residues leucine 371–glycine 398 are disordered.

It carries out the reaction a 5'-end (N(7)-methyl 5'-triphosphoguanosine)-ribonucleoside in mRNA + S-adenosyl-L-methionine = a 5'-end (N(7)-methyl 5'-triphosphoguanosine)-(2'-O-methyl-ribonucleoside) in mRNA + S-adenosyl-L-homocysteine + H(+). Functionally, S-adenosyl-L-methionine-dependent methyltransferase that mediates RNA cap1 2'-O-ribose methylation to the 5'-cap structure of RNAs. Methylates the ribose of the first nucleotide of a m(7)GpppG-capped mRNA to produce m(7)GpppNmp (cap1). This chain is Cap-specific mRNA (nucleoside-2'-O-)-methyltransferase 1, found in Leishmania braziliensis.